Consider the following 354-residue polypeptide: 4-hydroxy-3-methylbut-2-en-1-yl diphosphate synthase (flavodoxin) (354 aa).

Residues C263, C266, C298, and E305 each contribute to the [4Fe-4S] cluster site.

It belongs to the IspG family. [4Fe-4S] cluster is required as a cofactor.

It catalyses the reaction (2E)-4-hydroxy-3-methylbut-2-enyl diphosphate + oxidized [flavodoxin] + H2O + 2 H(+) = 2-C-methyl-D-erythritol 2,4-cyclic diphosphate + reduced [flavodoxin]. The protein operates within isoprenoid biosynthesis; isopentenyl diphosphate biosynthesis via DXP pathway; isopentenyl diphosphate from 1-deoxy-D-xylulose 5-phosphate: step 5/6. Its function is as follows. Converts 2C-methyl-D-erythritol 2,4-cyclodiphosphate (ME-2,4cPP) into 1-hydroxy-2-methyl-2-(E)-butenyl 4-diphosphate. This is 4-hydroxy-3-methylbut-2-en-1-yl diphosphate synthase (flavodoxin) from Fusobacterium nucleatum subsp. nucleatum (strain ATCC 25586 / DSM 15643 / BCRC 10681 / CIP 101130 / JCM 8532 / KCTC 2640 / LMG 13131 / VPI 4355).